A 271-amino-acid polypeptide reads, in one-letter code: Colicin-M (271 aa).

Positions 2–9 match the TonB box motif; it reads ETLTVHAP.

Colicins are polypeptide toxins produced by and active against E.coli and closely related bacteria. Its function is as follows. This is a calcium-requiring inhibitor for murein biosynthesis; it causes lysis of sensitive cells accompanied by murein degradation. The target site is possibly the cytoplasmic membrane. The chain is Colicin-M (cma) from Escherichia coli.